A 288-amino-acid chain; its full sequence is ATP synthase gamma chain (288 aa).

It belongs to the ATPase gamma chain family. F-type ATPases have 2 components, CF(1) - the catalytic core - and CF(0) - the membrane proton channel. CF(1) has five subunits: alpha(3), beta(3), gamma(1), delta(1), epsilon(1). CF(0) has three main subunits: a, b and c.

It localises to the cell inner membrane. Produces ATP from ADP in the presence of a proton gradient across the membrane. The gamma chain is believed to be important in regulating ATPase activity and the flow of protons through the CF(0) complex. The sequence is that of ATP synthase gamma chain from Polaromonas sp. (strain JS666 / ATCC BAA-500).